The following is a 476-amino-acid chain: Bifunctional protein HldE (476 aa).

The tract at residues 1–318 (MAQYSAEFKQ…ENAIHARPET (318 aa)) is ribokinase. Position 195-198 (195-198 (NMSE)) interacts with ATP. D264 is an active-site residue. The segment at 344-476 (MTNGCFDILH…VIEKIKLLKD (133 aa)) is cytidylyltransferase.

This sequence in the N-terminal section; belongs to the carbohydrate kinase PfkB family. The protein in the C-terminal section; belongs to the cytidylyltransferase family. Homodimer.

It carries out the reaction D-glycero-beta-D-manno-heptose 7-phosphate + ATP = D-glycero-beta-D-manno-heptose 1,7-bisphosphate + ADP + H(+). It catalyses the reaction D-glycero-beta-D-manno-heptose 1-phosphate + ATP + H(+) = ADP-D-glycero-beta-D-manno-heptose + diphosphate. Its pathway is nucleotide-sugar biosynthesis; ADP-L-glycero-beta-D-manno-heptose biosynthesis; ADP-L-glycero-beta-D-manno-heptose from D-glycero-beta-D-manno-heptose 7-phosphate: step 1/4. The protein operates within nucleotide-sugar biosynthesis; ADP-L-glycero-beta-D-manno-heptose biosynthesis; ADP-L-glycero-beta-D-manno-heptose from D-glycero-beta-D-manno-heptose 7-phosphate: step 3/4. Catalyzes the phosphorylation of D-glycero-D-manno-heptose 7-phosphate at the C-1 position to selectively form D-glycero-beta-D-manno-heptose-1,7-bisphosphate. In terms of biological role, catalyzes the ADP transfer from ATP to D-glycero-beta-D-manno-heptose 1-phosphate, yielding ADP-D-glycero-beta-D-manno-heptose. The protein is Bifunctional protein HldE of Haemophilus influenzae (strain PittGG).